The following is a 65-amino-acid chain: Antimicrobial peptide THP1 (65 aa).

Positions 1 to 25 (MRIVYLLFPFILLLAQGAAGSSLAL) are cleaved as a signal peptide. Cystine bridges form between Cys-31/Cys-53, Cys-38/Cys-59, and Cys-43/Cys-60. Positions 61–65 (KTLLG) are excised as a propeptide.

This sequence belongs to the beta-defensin family.

It is found in the secreted. Its function is as follows. Bactericidal activity; inhibits S.aureus and E.coli. This Meleagris gallopavo (Wild turkey) protein is Antimicrobial peptide THP1.